Reading from the N-terminus, the 559-residue chain is Potassium-transporting ATPase potassium-binding subunit (559 aa).

A run of 12 helical transmembrane segments spans residues 5–25, 63–83, 132–152, 170–190, 250–270, 283–303, 329–349, 356–376, 379–399, 416–436, 484–504, and 524–544; these read GFLLTASFLLILFVLARPLGV, LLAILTLNLLGLTVLFLMLLG, GLTVQNFLSAATGIAVIFALI, LVRITLWILLPLALLIALLFI, LTNMVQMLAIFLIPAALCFAF, LLWAMSIIFVVCVAVVMSAEV, VLVSSLFAVVTTAASCGAVIA, ALGGMVPMWLMQIGEVVFGGV, GLYGMLLFVLLAVFIAGLMIG, MTALAILITPTLVLLGTALAM, LLAFCMFVGRFGVIIPVMAIA, and GALFVGLLIGTVLLVGALTFI.

The protein belongs to the KdpA family. In terms of assembly, the system is composed of three essential subunits: KdpA, KdpB and KdpC.

It localises to the cell inner membrane. In terms of biological role, part of the high-affinity ATP-driven potassium transport (or Kdp) system, which catalyzes the hydrolysis of ATP coupled with the electrogenic transport of potassium into the cytoplasm. This subunit binds the periplasmic potassium ions and delivers the ions to the membrane domain of KdpB through an intramembrane tunnel. The polypeptide is Potassium-transporting ATPase potassium-binding subunit (Citrobacter koseri (strain ATCC BAA-895 / CDC 4225-83 / SGSC4696)).